The following is a 261-amino-acid chain: MAEAGMRKILIIGIGSGNPEHMTVQAINALNCADVLFIPTKGAKKTELAEVRRDICARYVTRKDSRTVEFAVPVRRTEGVSYDGSVDDWHAQIAGIYEALLSKELGEEGTGAFLVWGDPMLYDSTIRIVERVKARGEVAFAYDVIPGITSLQALCASHRIPLNLVGKPVEITTGRRLHESFPEKSQTSVVMLDGEQAFQRVEDPEAEIYWGAYLGTRDEIVISGRVAEVKDRILETRAAARAKMGWIMDIYLLRKGADFDE.

It carries out the reaction precorrin-5 + S-adenosyl-L-methionine + H2O = precorrin-6A + acetate + S-adenosyl-L-homocysteine + 2 H(+). Its pathway is cofactor biosynthesis; adenosylcobalamin biosynthesis; cob(II)yrinate a,c-diamide from precorrin-2 (aerobic route): step 5/10. In terms of biological role, catalyzes the methylation of C-1 in precorrin-5 and the subsequent extrusion of acetic acid from the resulting intermediate to form cobalt-precorrin-6A. The chain is Precorrin-6A synthase [deacetylating] (cobF) from Sinorhizobium sp.